A 72-amino-acid polypeptide reads, in one-letter code: Protein SlyX homolog (72 aa).

The disordered stretch occupies residues 53 to 72; the sequence is KDISPSNIRREEEETPPPHY.

It belongs to the SlyX family.

The polypeptide is Protein SlyX homolog (Marinobacter nauticus (strain ATCC 700491 / DSM 11845 / VT8) (Marinobacter aquaeolei)).